The chain runs to 154 residues: Aspartate carbamoyltransferase regulatory chain (154 aa).

Zn(2+)-binding residues include C109, C114, C138, and C141.

It belongs to the PyrI family. In terms of assembly, contains catalytic and regulatory chains. It depends on Zn(2+) as a cofactor.

Functionally, involved in allosteric regulation of aspartate carbamoyltransferase. The chain is Aspartate carbamoyltransferase regulatory chain from Aeromonas hydrophila subsp. hydrophila (strain ATCC 7966 / DSM 30187 / BCRC 13018 / CCUG 14551 / JCM 1027 / KCTC 2358 / NCIMB 9240 / NCTC 8049).